A 137-amino-acid chain; its full sequence is Small ribosomal subunit protein uS9c (137 aa).

The protein belongs to the universal ribosomal protein uS9 family.

Its subcellular location is the plastid. The protein resides in the chloroplast. The sequence is that of Small ribosomal subunit protein uS9c (rps9) from Chlorella vulgaris (Green alga).